The sequence spans 405 residues: 3-isopropylmalate dehydrogenase 2, chloroplastic (405 aa).

The N-terminal 33 residues, 1 to 33 (MAAALQTNIRTVKVPATFRAVSKQSLAPFRVRC), are a transit peptide targeting the chloroplast. Position 70 is a phosphoserine (S70). 114–129 (IGGYKWDNNEKHLRPE) provides a ligand contact to NAD(+). Residues R136, R146, and R174 each contribute to the substrate site. Residue N234 coordinates NAD(+). Substrate is bound at residue D264. D264 contributes to the Mg(2+) binding site. N265 is a binding site for NAD(+). Residues D288 and D292 each contribute to the Mg(2+) site. NAD(+) is bound at residue 318–334 (EPIHGSAPDIAGQDKAN).

This sequence belongs to the isocitrate and isopropylmalate dehydrogenases family. Homodimer. Mg(2+) serves as cofactor. It depends on Mn(2+) as a cofactor. In terms of tissue distribution, expressed at low levels in seedlings, cotyledons, hypocotyls, flowers, roots, pollen, leaves and stems.

It is found in the plastid. Its subcellular location is the chloroplast stroma. The enzyme catalyses (2R,3S)-3-isopropylmalate + NAD(+) = 4-methyl-2-oxopentanoate + CO2 + NADH. It functions in the pathway amino-acid biosynthesis; L-leucine biosynthesis; L-leucine from 3-methyl-2-oxobutanoate: step 3/4. Regulated by a thiol-based redox modification. Involved in leucine biosynthesis; catalyzes the oxidative decarboxylation step in leucine biosynthesis (primary metabolism). Catalyzes the oxidation of 3-carboxy-2-hydroxy-4-methylpentanoate (3-isopropylmalate, 3-IPM) to 3-carboxy-4-methyl-2-oxopentanoate. The product decarboxylates to 4-methyl-2 oxopentanoate. Required during pollen development and involved in embryo sac development. In Arabidopsis thaliana (Mouse-ear cress), this protein is 3-isopropylmalate dehydrogenase 2, chloroplastic.